Consider the following 360-residue polypeptide: Phosphate acyltransferase (360 aa).

This sequence belongs to the PlsX family. As to quaternary structure, homodimer. Probably interacts with PlsY.

The protein localises to the cytoplasm. It catalyses the reaction a fatty acyl-[ACP] + phosphate = an acyl phosphate + holo-[ACP]. The protein operates within lipid metabolism; phospholipid metabolism. Catalyzes the reversible formation of acyl-phosphate (acyl-PO(4)) from acyl-[acyl-carrier-protein] (acyl-ACP). This enzyme utilizes acyl-ACP as fatty acyl donor, but not acyl-CoA. This is Phosphate acyltransferase from Thermobifida fusca (strain YX).